Here is a 431-residue protein sequence, read N- to C-terminus: MLCTVLLALAVLLAVAVTGAVLFLNHTHTPGTAPPPVVSTGAAGANSALVTVERADSSRLSILIDPRCPDLADSFARLESAQASVLEALTEHQAQPRLVGDQEQELLDTLADQLPRLLTRASELQTECMGLRKGHGTLGQGLSALQSEQGRLIQLLSESQGHMAHLVNSVGDVLDALQRDRGLGRPRAKADLQRAPARGARPRGCATGSRPRDCLDVLLSGQQDDGIYSVFPTHYPAGFQVYCDMRTDGGGWTVFQRREDGSVNFFRGWDAYRDGFGRLTGEHWLGLKRIHALTTQTAYELHVDLEDFDNGTAYARYGSFGVGLFSVDPEEDGYPLTVADYSGTAGDSLLKHSGMRFTTKDRDSDHSENNCAAFYRGAWWYRNCHTSNLNGQYLRGAHTSYADGVEWSSWTGWQYSLKFSEMKIRPVREDR.

Over 1 to 3 (MLC) the chain is Cytoplasmic. A helical; Signal-anchor for type II membrane protein transmembrane segment spans residues 4 to 24 (TVLLALAVLLAVAVTGAVLFL). Over 25-431 (NHTHTPGTAP…MKIRPVREDR (407 aa)) the chain is Extracellular. Residues 205–428 (CATGSRPRDC…FSEMKIRPVR (224 aa)) form the Fibrinogen C-terminal domain. A disulfide bridge connects residues C214 and C243. An N-linked (GlcNAc...) asparagine glycan is attached at N310. Positions 363 and 365 each coordinate Ca(2+). A disulfide bond links C371 and C384.

Homotetramer; disulfide-linked.

It localises to the membrane. In terms of biological role, acetyl group-binding receptor which shows a high-affinity and calcium-dependent binding to acetylated structures such as chitin, some N-acetylated carbohydrates, and amino acids, but not to their non-acetylated counterparts. Can facilitate the endocytosis of acetylated components. In Macaca fascicularis (Crab-eating macaque), this protein is Fibrinogen C domain-containing protein 1 (FIBCD1).